The primary structure comprises 337 residues: tRNA pseudouridine synthase D (337 aa).

Asp77 functions as the Nucleophile in the catalytic mechanism. In terms of domain architecture, TRUD spans 152–308 (GFPNYFTEQR…ARDFHWEFVE (157 aa)).

The protein belongs to the pseudouridine synthase TruD family.

The catalysed reaction is uridine(13) in tRNA = pseudouridine(13) in tRNA. Responsible for synthesis of pseudouridine from uracil-13 in transfer RNAs. The polypeptide is tRNA pseudouridine synthase D (Mannheimia succiniciproducens (strain KCTC 0769BP / MBEL55E)).